Consider the following 954-residue polypeptide: Glycine dehydrogenase (decarboxylating) (954 aa).

The residue at position 704 (lysine 704) is an N6-(pyridoxal phosphate)lysine.

The protein belongs to the GcvP family. The glycine cleavage system is composed of four proteins: P, T, L and H. Pyridoxal 5'-phosphate serves as cofactor.

The enzyme catalyses N(6)-[(R)-lipoyl]-L-lysyl-[glycine-cleavage complex H protein] + glycine + H(+) = N(6)-[(R)-S(8)-aminomethyldihydrolipoyl]-L-lysyl-[glycine-cleavage complex H protein] + CO2. Functionally, the glycine cleavage system catalyzes the degradation of glycine. The P protein binds the alpha-amino group of glycine through its pyridoxal phosphate cofactor; CO(2) is released and the remaining methylamine moiety is then transferred to the lipoamide cofactor of the H protein. This Rhizobium etli (strain CIAT 652) protein is Glycine dehydrogenase (decarboxylating).